The chain runs to 2944 residues: Collagen alpha-1(VII) chain (2944 aa).

Residues 1 to 24 form the signal peptide; sequence MRLRLLVAALCAAEILMGAPEVWA. Residues 18–1254 form a nonhelical region (NC1) region; sequence GAPEVWAQPR…TGPCAVHCPK (1237 aa). Positions 39-212 constitute a VWFA 1 domain; the sequence is DIVFLLDGSS…SILRTLLPLI (174 aa). 9 Fibronectin type-III domains span residues 235-330, 331-417, 418-508, 511-598, 601-688, 689-776, 779-867, 870-957, and 959-1053; these read GPRD…TAKE, GLEL…TASS, VEQT…LEQL, PVMN…DPEA, VVPG…DPLG, PVRR…APEP, SVSK…PPAT, LLET…EPSH, and PSTE…SHGP. N-linked (GlcNAc...) asparagine glycosylation occurs at N338. N787 carries N-linked (GlcNAc...) asparagine glycosylation. The 176-residue stretch at 1055-1230 folds into the VWFA 2 domain; sequence DVVFLLHATR…PGLDRAVSDL (176 aa). An N-linked (GlcNAc...) asparagine glycan is attached at N1110. The Cell attachment site motif lies at 1171–1173; it reads RGD. Residues 1255 to 1475 are interrupted collagenous region; it reads GQKGEPGVTG…GLRGAPGMTG (221 aa). The interval 1255–2775 is triple-helical region; it reads GQKGEPGVTG…GPRGEKGEAA (1521 aa). Disordered regions lie at residues 1259–1934 and 1960–2773; these read EPGV…GSLP and SSGS…EKGE. Residues 1338-1352 show a composition bias toward low complexity; the sequence is RGPQGPKGEPGEPGQ. Residues 1353 to 1363 are compositionally biased toward gly residues; that stretch reads ITGGGGPGFPG. 2 stretches are compositionally biased toward basic and acidic residues: residues 1397-1406 and 1439-1448; these read KGDKGDRGER and PGEKGEKGDC. Residues 1507–1518 are compositionally biased toward low complexity; that stretch reads PGAAGHPGVEGP. Basic and acidic residues-rich tracts occupy residues 1527–1536, 1627–1639, and 1666–1680; these read RRGEKGEPGR, RGRD…KGDE, and VGEK…EDGR. Pro residues predominate over residues 1813-1822; the sequence is PPGPPGPPGV. 3 stretches are compositionally biased toward basic and acidic residues: residues 1846-1855, 1862-1871, and 1968-1984; these read EDGRKGEKGD, EGPDGPKGER, and PERR…RGPP. Positions 2002 to 2004 match the Cell attachment site motif; it reads RGD. A compositionally biased stretch (gly residues) spans 2040 to 2049; that stretch reads GRAGGSGEAG. A compositionally biased stretch (basic and acidic residues) spans 2050–2068; it reads RPGERGERGEKGERGDQGR. The Cell attachment site signature appears at 2063 to 2065; it reads RGD. Pro residues predominate over residues 2074 to 2083; it reads LPGPPGPPGP. The segment covering 2130-2140 has biased composition (basic and acidic residues); sequence DVGEPGKRGHD. A 4-hydroxyproline mark is found at P2158, P2167, P2176, and P2179. Composition is skewed to low complexity over residues 2182 to 2197, 2226 to 2241, 2279 to 2299, and 2306 to 2317; these read PGLA…SGLK, SGLV…PGQV, PKGE…PPGA, and PGDLAGALLGEP. The span at 2319 to 2335 shows a compositional bias: basic and acidic residues; the sequence is AKGDRGLPGPRGEKGEA. Positions 2414-2427 are enriched in low complexity; the sequence is ERGLAGPPGREGAP. 2 stretches are compositionally biased toward basic and acidic residues: residues 2462 to 2477 and 2525 to 2544; these read RGER…DGHP and AKGD…KGPR. The span at 2576–2594 shows a compositional bias: low complexity; sequence PKGEPGAAGIPGEPGAPGK. The short motif at 2601–2603 is the Cell attachment site element; the sequence is RGD. Basic and acidic residues predominate over residues 2615–2636; it reads LKGEKGIKGTCGRDGERGDKGE. 5-hydroxylysine is present on residues K2616 and K2622. The short motif at 2631–2633 is the Cell attachment site element; sequence RGD. 3 positions are modified to 4-hydroxyproline: P2655, P2658, and P2664. Gly residues predominate over residues 2695–2704; it reads GPPGVGGFPG. A nonhelical region (NC2) region spans residues 2776–2944; that stretch reads LTEDDIRDFV…GVHSQKTGAA (169 aa). The 53-residue stretch at 2879–2931 folds into the BPTI/Kunitz inhibitor domain; that stretch reads CSLPLDEGSCTAYTLRWYHRAVPGGTACHPFVYGGCGGNANRFGTREACERRC. Intrachain disulfides connect C2879/C2931, C2888/C2914, and C2906/C2927.

As to quaternary structure, homotrimer. Interacts with MIA3/TANGO1; facilitating its loading into transport carriers and subsequent secretion. Post-translationally, prolines at the third position of the tripeptide repeating unit (G-X-Y) are hydroxylated in some or all of the chains.

Its subcellular location is the secreted. It localises to the extracellular space. The protein localises to the extracellular matrix. The protein resides in the basement membrane. Stratified squamous epithelial basement membrane protein that forms anchoring fibrils which may contribute to epithelial basement membrane organization and adherence by interacting with extracellular matrix (ECM) proteins such as type IV collagen. The protein is Collagen alpha-1(VII) chain of Mus musculus (Mouse).